The following is a 1169-amino-acid chain: Transcription-repair-coupling factor (1169 aa).

A Helicase ATP-binding domain is found at 634-795; the sequence is DMERARPMDR…MLGVRDLSVI (162 aa). An ATP-binding site is contributed by 647–654; the sequence is GDVGYGKT. Positions 748-751 match the DEEQ box motif; sequence DEEQ. The region spanning 809-970 is the Helicase C-terminal domain; the sequence is VLEQNTNFIK…GFKIAMRDLN (162 aa).

This sequence in the N-terminal section; belongs to the UvrB family. The protein in the C-terminal section; belongs to the helicase family. RecG subfamily.

The protein localises to the cytoplasm. Couples transcription and DNA repair by recognizing RNA polymerase (RNAP) stalled at DNA lesions. Mediates ATP-dependent release of RNAP and its truncated transcript from the DNA, and recruitment of nucleotide excision repair machinery to the damaged site. This Staphylococcus epidermidis (strain ATCC 35984 / DSM 28319 / BCRC 17069 / CCUG 31568 / BM 3577 / RP62A) protein is Transcription-repair-coupling factor.